The sequence spans 117 residues: Photosystem II reaction center Psb28 protein (117 aa).

This sequence belongs to the Psb28 family. In terms of assembly, part of the photosystem II complex.

It is found in the cellular thylakoid membrane. This is Photosystem II reaction center Psb28 protein from Prochlorococcus marinus subsp. pastoris (strain CCMP1986 / NIES-2087 / MED4).